The chain runs to 2253 residues: Polycystin family receptor for egg jelly (2253 aa).

A signal peptide spans 1-19 (MRPGPALLLLGVGLSLSVG). The Extracellular portion of the chain corresponds to 20–1184 (RLPLPPVPRG…NIIKSLHQNP (1165 aa)). The segment covering 154–169 (RPASPAARVSPRSAAP) has biased composition (low complexity). The disordered stretch occupies residues 154-177 (RPASPAARVSPRSAAPGPRPQQGF). 14 N-linked (GlcNAc...) asparagine glycosylation sites follow: Asn197, Asn242, Asn295, Asn306, Asn345, Asn349, Asn481, Asn674, Asn849, Asn890, Asn923, Asn939, Asn958, and Asn965. The 699-residue stretch at 215 to 913 (CVIQRVRINT…STMFCDFTND (699 aa)) folds into the REJ domain. The chain crosses the membrane as a helical span at residues 1185–1205 (VTLFTVLFIILLYVGLAFWAL). At 1206 to 1389 (YRDEMDQHLR…VAKTFNRLQR (184 aa)) the chain is on the cytoplasmic side. Positions 1230–1347 (LCYLVTIFTG…TLDRTFHVTH (118 aa)) constitute a PLAT domain. Residues 1390-1410 (LSCCLAMLLSSLLCNIMFFNL) traverse the membrane as a helical segment. Over 1411–1427 (NRQEQTESRERKYMRSM) the chain is Extracellular. Residues 1428-1448 (MIGIESVLITIPVQLLITFLF) form a helical membrane-spanning segment. The Cytoplasmic segment spans residues 1449–1576 (TCSQRKPQAD…KPRIVLPWWC (128 aa)). The segment at 1494–1562 (PREVAKPASK…EQHPSQKDLQ (69 aa)) is disordered. A compositionally biased stretch (basic residues) spans 1517–1527 (SKPKHRHRKAQ). Basic and acidic residues predominate over residues 1549–1558 (DVHSEQHPSQ). Residues 1577–1597 (VYVAWFLVFATSSISSFFIVF) form a helical membrane-spanning segment. At 1598 to 1607 (YGLTYGYDKS) the chain is on the extracellular side. A helical transmembrane segment spans residues 1608–1628 (IEWLFASFCSFCQSVLLVQPS). At 1629–1708 (KIILLSGFRT…RKKRIKRRAL (80 aa)) the chain is on the cytoplasmic side. A helical transmembrane segment spans residues 1709-1729 (LFLSYILTHFIFLALLLILIV). The Extracellular segment spans residues 1730–1966 (LLRHTDCFYY…FDRKASAEIY (237 aa)). Asn1836, Asn1893, and Asn1944 each carry an N-linked (GlcNAc...) asparagine glycan. The helical transmembrane segment at 1967–1987 (LYVAILIFFLAYVVDEGCIIM) threads the bilayer. Residues 1988-1996 (QERASYVRS) lie on the Cytoplasmic side of the membrane. A helical transmembrane segment spans residues 1997–2017 (VYNLLNFALKCIFTVLIVLFL). Residues 2018–2042 (RKHFLATGIIRFYLSNPEDFIPFHA) are Extracellular-facing. Residues 2043–2063 (VSQVDHIMRIILGFLLFLTIL) traverse the membrane as a helical segment. Residues 2064–2091 (KTLRYSRFFYDVRLAQRAIQAALPGICH) are Cytoplasmic-facing. The chain crosses the membrane as a helical span at residues 2092–2112 (MAFVVSVYFFVYMAFGYLVFG). Topologically, residues 2113-2145 (QHEWNYSNLIHSTQTVFSYCVSAFQNTEFSNNR) are extracellular. The helical transmembrane segment at 2146 to 2166 (ILGVLFLSSFMLVMICVLINL) threads the bilayer. The Cytoplasmic segment spans residues 2167–2253 (FQAVILSAYE…NGKKMVYLVV (87 aa)).

This sequence belongs to the polycystin family. Exclusively expressed in testis.

The protein localises to the cell membrane. It is found in the cytoplasmic vesicle. Its subcellular location is the secretory vesicle. The protein resides in the acrosome membrane. It localises to the nucleus. In terms of biological role, testis-specific protein that controls sperm transport and the timing of zona pellucida-evoked exocytosis of the sperm acrosome. This is Polycystin family receptor for egg jelly from Homo sapiens (Human).